We begin with the raw amino-acid sequence, 467 residues long: tRNA-2-methylthio-N(6)-dimethylallyladenosine synthase (467 aa).

An MTTase N-terminal domain is found at 4–124; sequence RKLFIKSYGC…LPEMVAKVER (121 aa). Positions 13, 49, 87, 161, 165, and 168 each coordinate [4Fe-4S] cluster. A Radical SAM core domain is found at 147–379; sequence QAHGPSAFLS…QARLVEIQQA (233 aa). A TRAM domain is found at 382-444; sequence QACVGRPMDV…SNSLAARLVE (63 aa).

Belongs to the methylthiotransferase family. MiaB subfamily. As to quaternary structure, monomer. [4Fe-4S] cluster is required as a cofactor.

It is found in the cytoplasm. It catalyses the reaction N(6)-dimethylallyladenosine(37) in tRNA + (sulfur carrier)-SH + AH2 + 2 S-adenosyl-L-methionine = 2-methylsulfanyl-N(6)-dimethylallyladenosine(37) in tRNA + (sulfur carrier)-H + 5'-deoxyadenosine + L-methionine + A + S-adenosyl-L-homocysteine + 2 H(+). Functionally, catalyzes the methylthiolation of N6-(dimethylallyl)adenosine (i(6)A), leading to the formation of 2-methylthio-N6-(dimethylallyl)adenosine (ms(2)i(6)A) at position 37 in tRNAs that read codons beginning with uridine. In Rhodospirillum rubrum (strain ATCC 11170 / ATH 1.1.1 / DSM 467 / LMG 4362 / NCIMB 8255 / S1), this protein is tRNA-2-methylthio-N(6)-dimethylallyladenosine synthase.